A 1027-amino-acid chain; its full sequence is Presequence protease, mitochondrial (1027 aa).

A mitochondrion-targeting transit peptide spans 1–22; sequence MIRQCWAGLRLCRALYQTSYRW. H98 contributes to the Zn(2+) binding site. E101 (proton acceptor) is an active-site residue. Zn(2+) contacts are provided by H102 and E199. Residues C113 and C550 are joined by a disulfide bond. The interval 803-827 is disordered; that stretch reads RKAIRPHVVEKSSNPSPSGSEISRT. Low complexity predominate over residues 814–825; it reads SSNPSPSGSEIS.

It belongs to the peptidase M16 family. PreP subfamily. As to quaternary structure, monomer and homodimer; homodimerization is induced by binding of the substrate. Zn(2+) is required as a cofactor. A disulfide bond locks the enzyme in the closed conformation preventing substrate entry into the catalytic chamber.

Its subcellular location is the mitochondrion matrix. Its activity is regulated as follows. Mainly exists in a closed and catalytically competent conformation but a closed-to-open switch allows substrate entry into the catalytic chamber. Substrate binding induces closure and dimerization. A disulfide bond may lock the enzyme in a closed conformation preventing substrate entry into the catalytic chamber, participating in redox regulation of the enzyme. Inhibited by metal-chelating agents. Inhibited by nickel and zinc excess, and slightly activated by manganese. Metalloendopeptidase of the mitochondrial matrix that functions in peptide cleavage and degradation rather than in protein processing. Has an ATP-independent activity. Specifically cleaves peptides in the range of 5 to 65 residues. Shows a preference for cleavage after small polar residues and before basic residues, but without any positional preference. Degrades the transit peptides of mitochondrial proteins after their cleavage. Also degrades other unstructured peptides. The polypeptide is Presequence protease, mitochondrial (pitrm1) (Xenopus laevis (African clawed frog)).